Consider the following 780-residue polypeptide: Catenin beta-1 (780 aa).

Residues 34-56 form a disordered region; sequence GIHSGATTTAPSLSGKGNPEDDD. 10 ARM repeats span residues 140-179, 224-263, 266-305, 350-389, 399-430, 431-472, 478-518, 520-561, 583-622, and 624-663; these read NYQD…QLSK, REGL…NLLL, EGAK…ILAY, SSNK…NLSD, GLLG…TCNN, YKNK…HLTS, EMAQ…NLAL, PANH…QFVE, IHNR…ELAQ, and KEAA…RMSE. A compositionally biased stretch (basic and acidic residues) spans 735–744; the sequence is EHEMAGHHPG. Positions 735–770 are disordered; the sequence is EHEMAGHHPGPDYPVDGLPDLGHTQDLIDGLPPGDS.

Belongs to the beta-catenin family. In terms of assembly, interacts with adnpa. Interacts with cdh1 during oogenesis and in the unfertilized egg. Interacts with ctnna1 and cdh2. Post-translationally, phosphorylation by gsk3b promotes ubiquitination and subsequent degradation by the proteasome. Ubiquitinated when phosphorylated by gsk3b, leading to its degradation. In terms of tissue distribution, expressed in the successional lamina, also expressed in both the epithelial and mesenchymal cells of the developing replacement tooth (at protein level). Expressed in the enamel organ as well as in the inner and outer dental epithelium during replacement tooth morphogenesis (at protein level). Expressed in the differentiated, polarized odontoblasts that line the dentine matrix as well as in the inner and outer dental epithelium during tooth cytodifferentiation (at protein level). Expressed in the reduced enamel organ, odontoblasts and weakly at the center of the dental papilla of the functional tooth as well as in the epithelial crypts surrounding the functional tooth (at protein level). Expressed in the liver (at protein level). Expressed at intercalated disks in the heart (at protein level). Expressed in the ovary.

It localises to the cytoplasm. The protein localises to the nucleus. It is found in the cell membrane. Its subcellular location is the cell junction. The protein resides in the adherens junction. In terms of biological role, key downstream component of the canonical Wnt signaling pathway. In the absence of Wnt, forms a complex with axin1, axin2, apc, csnk1a1 and gsk3b that promotes phosphorylation on N-terminal Ser and Thr residues and ubiquitination of ctnnb1 and its subsequent degradation by the proteasome. In the presence of Wnt ligand, ctnnb1 is not ubiquitinated and accumulates in the nucleus, where it acts as a coactivator for transcription factors of the TCF/LEF family, leading to activate Wnt responsive genes. Plays a key role in dorsoventral patterning: in prospective ventral blastomeres, its down-regulation by axin1 and axin2 leads to inhibit the Wnt signaling pathway, while in prospective dorsal blastomeres, degradation of axin results in stabilization and nuclear translocation of ctnnb1. The protein is Catenin beta-1 of Danio rerio (Zebrafish).